A 192-amino-acid polypeptide reads, in one-letter code: Flavin prenyltransferase UbiX (192 aa).

FMN is bound by residues 10 to 12, Ser36, 92 to 95, and Arg127; these read GAS and SVAT. Tyr157 and Lys173 together coordinate dimethylallyl phosphate.

The protein belongs to the UbiX/PAD1 family.

The enzyme catalyses dimethylallyl phosphate + FMNH2 = prenylated FMNH2 + phosphate. Flavin prenyltransferase that catalyzes the synthesis of the prenylated FMN cofactor (prenyl-FMN) for 4-hydroxy-3-polyprenylbenzoic acid decarboxylase UbiD. The prenyltransferase is metal-independent and links a dimethylallyl moiety from dimethylallyl monophosphate (DMAP) to the flavin N5 and C6 atoms of FMN. The protein is Flavin prenyltransferase UbiX of Chlamydia trachomatis serovar D (strain ATCC VR-885 / DSM 19411 / UW-3/Cx).